The primary structure comprises 179 residues: Segregation and condensation protein B (179 aa).

It belongs to the ScpB family. In terms of assembly, homodimer. Homodimerization may be required to stabilize the binding of ScpA to the Smc head domains. Component of a cohesin-like complex composed of ScpA, ScpB and the Smc homodimer, in which ScpA and ScpB bind to the head domain of Smc. The presence of the three proteins is required for the association of the complex with DNA.

The protein resides in the cytoplasm. Participates in chromosomal partition during cell division. May act via the formation of a condensin-like complex containing Smc and ScpA that pull DNA away from mid-cell into both cell halves. The protein is Segregation and condensation protein B of Staphylococcus haemolyticus (strain JCSC1435).